We begin with the raw amino-acid sequence, 289 residues long: ATP synthase gamma chain (289 aa).

This sequence belongs to the ATPase gamma chain family. In terms of assembly, F-type ATPases have 2 components, CF(1) - the catalytic core - and CF(0) - the membrane proton channel. CF(1) has five subunits: alpha(3), beta(3), gamma(1), delta(1), epsilon(1). CF(0) has three main subunits: a, b and c.

Its subcellular location is the cell inner membrane. In terms of biological role, produces ATP from ADP in the presence of a proton gradient across the membrane. The gamma chain is believed to be important in regulating ATPase activity and the flow of protons through the CF(0) complex. In Herminiimonas arsenicoxydans, this protein is ATP synthase gamma chain.